Consider the following 167-residue polypeptide: CS6 fimbrial subunit B (167 aa).

The signal sequence occupies residues 1–21 (MLKKIIPAIVLIAGTSGVVNA).

It localises to the fimbrium. In Escherichia coli, this protein is CS6 fimbrial subunit B (cssB).